We begin with the raw amino-acid sequence, 330 residues long: Complement factor H-related protein 1 (330 aa).

The first 18 residues, 1–18, serve as a signal peptide directing secretion; sequence MWLLVSVILISRISSVGG. 5 Sushi domains span residues 22 to 84, 85 to 142, 145 to 203, 206 to 264, and 273 to 329; these read FCDF…PKCL, RLCF…KCRS, TSCV…QCKD, GKCG…KCLH, and MENY…TCAK. Cystine bridges form between C23–C72, C55–C83, C87–C129, C114–C140, C147–C190, C176–C201, C208–C251, C237–C262, C266–C317, and C300–C327. N-linked (GlcNAc...) asparagine glycosylation is present at N126. N-linked (GlcNAc...) asparagine glycosylation is present at N194.

Head-to-tail homodimer and heterodimer with CFHR2 or CFHR5. In terms of assembly, (Microbial infection) Interacts with C.albicans GPD2; the interaction is direct and leads to the degradation of C3. Post-translationally, N-glycosylated. Two forms are observed; one with a single side chain and the other with two. As to expression, expressed by the liver and secreted in plasma.

The protein localises to the secreted. Its function is as follows. Involved in complement regulation. The dimerized forms have avidity for tissue-bound complement fragments and efficiently compete with the physiological complement inhibitor CFH. Can associate with lipoproteins and may play a role in lipid metabolism. In Homo sapiens (Human), this protein is Complement factor H-related protein 1 (CFHR1).